Reading from the N-terminus, the 746-residue chain is NAD(P)H-quinone oxidoreductase subunit 5, chloroplastic (746 aa).

16 consecutive transmembrane segments (helical) span residues 9 to 29 (WIIP…LLLF), 40 to 60 (WTFL…YLSI), 89 to 109 (IDPL…LVLI), 125 to 145 (FAYM…SNLI), 147 to 167 (VYFF…FWFT), 185 to 205 (GDFG…SFEF), 221 to 241 (VNFL…IAKS), 258 to 278 (TPIS…FLVA), 280 to 300 (LLPL…IGII), 327 to 347 (LGYM…FHLI), 354 to 374 (ALLF…VGYS), 396 to 416 (TAFL…CFWS), 425 to 445 (LLFS…TAFY), 547 to 567 (ILFP…IGIP), 608 to 628 (FSVS…KPFY), and 723 to 743 (YLFL…FFYF).

It belongs to the complex I subunit 5 family. NDH is composed of at least 16 different subunits, 5 of which are encoded in the nucleus.

It localises to the plastid. Its subcellular location is the chloroplast thylakoid membrane. The enzyme catalyses a plastoquinone + NADH + (n+1) H(+)(in) = a plastoquinol + NAD(+) + n H(+)(out). It catalyses the reaction a plastoquinone + NADPH + (n+1) H(+)(in) = a plastoquinol + NADP(+) + n H(+)(out). In terms of biological role, NDH shuttles electrons from NAD(P)H:plastoquinone, via FMN and iron-sulfur (Fe-S) centers, to quinones in the photosynthetic chain and possibly in a chloroplast respiratory chain. The immediate electron acceptor for the enzyme in this species is believed to be plastoquinone. Couples the redox reaction to proton translocation, and thus conserves the redox energy in a proton gradient. This is NAD(P)H-quinone oxidoreductase subunit 5, chloroplastic (ndhF) from Barbarea verna (Land cress).